We begin with the raw amino-acid sequence, 369 residues long: Porin-like protein BUsg_347 (369 aa).

Residues 1–23 form the signal peptide; that stretch reads MKNHKSLAILIPMLFAGSTAVNA.

Belongs to the Gram-negative porin family. In terms of assembly, homotrimer.

It is found in the cell outer membrane. Functionally, forms pores that allow passive diffusion of small molecules across the membrane. The sequence is that of Porin-like protein BUsg_347 from Buchnera aphidicola subsp. Schizaphis graminum (strain Sg).